The chain runs to 372 residues: Spermidine/putrescine import ATP-binding protein PotA (372 aa).

One can recognise an ABC transporter domain in the interval 11–241 (IELRSIKKSY…PANLFVARFI (231 aa)). Residue 43–50 (GPSGCGKT) participates in ATP binding.

It belongs to the ABC transporter superfamily. Spermidine/putrescine importer (TC 3.A.1.11.1) family. The complex is composed of two ATP-binding proteins (PotA), two transmembrane proteins (PotB and PotC) and a solute-binding protein (PotD).

It localises to the cell inner membrane. The enzyme catalyses ATP + H2O + polyamine-[polyamine-binding protein]Side 1 = ADP + phosphate + polyamineSide 2 + [polyamine-binding protein]Side 1.. Its function is as follows. Part of the ABC transporter complex PotABCD involved in spermidine/putrescine import. Responsible for energy coupling to the transport system. The polypeptide is Spermidine/putrescine import ATP-binding protein PotA (Haemophilus influenzae (strain ATCC 51907 / DSM 11121 / KW20 / Rd)).